Reading from the N-terminus, the 187-residue chain is Thermosensitive gluconokinase (187 aa).

10–17 (GVSGSGKT) contacts ATP.

The protein belongs to the gluconokinase GntK/GntV family.

It carries out the reaction D-gluconate + ATP = 6-phospho-D-gluconate + ADP + H(+). The protein operates within carbohydrate acid metabolism; L-idonate degradation. The chain is Thermosensitive gluconokinase (idnK) from Escherichia coli (strain K12).